The primary structure comprises 399 residues: Argininosuccinate synthase (399 aa).

8-16 (AYSGGLDTT) is an ATP binding site. Residue Y87 coordinates L-citrulline. G117 provides a ligand contact to ATP. L-aspartate-binding residues include T119, N123, and D124. An L-citrulline-binding site is contributed by N123. L-citrulline contacts are provided by R127, S175, E259, and Y271.

This sequence belongs to the argininosuccinate synthase family. Type 1 subfamily. As to quaternary structure, homotetramer.

The protein resides in the cytoplasm. It carries out the reaction L-citrulline + L-aspartate + ATP = 2-(N(omega)-L-arginino)succinate + AMP + diphosphate + H(+). The protein operates within amino-acid biosynthesis; L-arginine biosynthesis; L-arginine from L-ornithine and carbamoyl phosphate: step 2/3. This Corynebacterium urealyticum (strain ATCC 43042 / DSM 7109) protein is Argininosuccinate synthase.